The primary structure comprises 398 residues: Elongation factor Tu (398 aa).

The region spanning lysine 10–glutamate 207 is the tr-type G domain. The segment at glycine 19 to threonine 26 is G1. Residue glycine 19 to threonine 26 coordinates GTP. Threonine 26 provides a ligand contact to Mg(2+). The interval glycine 63–asparagine 67 is G2. Positions aspartate 84–glycine 87 are G3. Residues aspartate 84–histidine 88 and asparagine 139–aspartate 142 contribute to the GTP site. The G4 stretch occupies residues asparagine 139–aspartate 142. The segment at serine 177–leucine 179 is G5.

The protein belongs to the TRAFAC class translation factor GTPase superfamily. Classic translation factor GTPase family. EF-Tu/EF-1A subfamily. Monomer.

The protein localises to the cytoplasm. The enzyme catalyses GTP + H2O = GDP + phosphate + H(+). Functionally, GTP hydrolase that promotes the GTP-dependent binding of aminoacyl-tRNA to the A-site of ribosomes during protein biosynthesis. The polypeptide is Elongation factor Tu (Streptococcus suis (strain 98HAH33)).